The primary structure comprises 551 residues: Tripartite motif-containing protein 5 (551 aa).

Position 2 is an N-acetylalanine (Ala2). Residues 15–55 (CPICLELLTEPLSLDCGHSFCQACITANHKESRERSCPLCR) form an RING-type zinc finger. At Ser82 the chain carries Phosphoserine. A B box-type zinc finger spans residues 87–128 (QKVDRCARHGEKLLLFCQQHGNVICWLCERSEEHRGHRTSLV). Residues Cys92, His95, Cys114, and His120 each coordinate Zn(2+). Residues 127-221 (LVEEVAQKYR…VQSENDMVLQ (95 aa)) adopt a coiled-coil conformation. The segment at 182–195 (FKQLRDILDCEESN) is required for interaction with GABARAP and for autophagy. Positions 276–551 (PDLKGMLQVF…LPMTLCSPSS (276 aa)) constitute a B30.2/SPRY domain.

This sequence belongs to the TRIM/RBCC family. As to quaternary structure, can form homodimers and homotrimers. In addition to lower-order dimerization, also exhibits a higher-order multimerization and both low- and high-order multimerizations are essential for its restriction activity. Interacts with BTBD1 and BTBD2. Interacts with PSMC4, PSMC5, PSMD7 and HSPA8/HSC70. Interacts (via B30.2/SPRY domain) with HSPA1A/B. Interacts with PSMC2, MAP3K7/TAK1, TAB2 and TAB3. Interacts with SQSTM1. Interacts with TRIM6 and TRIM34. Interacts with ULK1 (phosphorylated form), GABARAP, GABARAPL1, GABARAPL2, MAP1LC3A, MAP1LC3C and BECN1. Degraded in a proteasome-independent fashion in the absence of viral infection but in a proteasome-dependent fashion following exposure to restriction sensitive virus. In terms of processing, autoubiquitinated in a RING finger- and UBE2D2-dependent manner. Monoubiquitinated by TRIM21. Deubiquitinated by Yersinia YopJ. Ubiquitination may not lead to proteasomal degradation.

It localises to the cytoplasm. Its subcellular location is the nucleus. The enzyme catalyses S-ubiquitinyl-[E2 ubiquitin-conjugating enzyme]-L-cysteine + [acceptor protein]-L-lysine = [E2 ubiquitin-conjugating enzyme]-L-cysteine + N(6)-ubiquitinyl-[acceptor protein]-L-lysine.. The protein operates within protein modification; protein ubiquitination. Functionally, capsid-specific restriction factor that prevents infection from non-host-adapted retroviruses. Blocks viral replication early in the life cycle, after viral entry but before reverse transcription. In addition to acting as a capsid-specific restriction factor, also acts as a pattern recognition receptor that activates innate immune signaling in response to the retroviral capsid lattice. Binding to the viral capsid triggers its E3 ubiquitin ligase activity, and in concert with the heterodimeric ubiquitin conjugating enzyme complex UBE2V1-UBE2N (also known as UBC13-UEV1A complex) generates 'Lys-63'-linked polyubiquitin chains, which in turn are catalysts in the autophosphorylation of the MAP3K7/TAK1 complex (includes TAK1, TAB2, and TAB3). Activation of the MAP3K7/TAK1 complex by autophosphorylation results in the induction and expression of NF-kappa-B and MAPK-responsive inflammatory genes, thereby leading to an innate immune response in the infected cell. Plays a role in regulating autophagy through activation of autophagy regulator BECN1 by causing its dissociation from its inhibitors BCL2 and TAB2. The polypeptide is Tripartite motif-containing protein 5 (TRIM5) (Alouatta sara (Bolivian red howler monkey)).